We begin with the raw amino-acid sequence, 449 residues long: Bifunctional protein GlmU (449 aa).

A pyrophosphorylase region spans residues 1 to 226; that stretch reads MNNIHAIILA…KFEVLGVNDK (226 aa). Residues 9 to 12, Lys-23, Gln-73, 78 to 79, 100 to 102, Gly-137, Glu-151, Asn-166, and Asn-224 each bind UDP-N-acetyl-alpha-D-glucosamine; these read LAAG, GT, and YGD. Asp-102 lines the Mg(2+) pocket. Position 224 (Asn-224) interacts with Mg(2+). The interval 227–247 is linker; that stretch reads VQLAELERLFQKDQAIQFMKQ. Residues 248 to 449 are N-acetyltransferase; the sequence is GLGLKDPTRF…QKNLKYRSKK (202 aa). UDP-N-acetyl-alpha-D-glucosamine is bound by residues Arg-330 and Lys-348. The Proton acceptor role is filled by His-360. Residues Tyr-363 and Asn-374 each contribute to the UDP-N-acetyl-alpha-D-glucosamine site. Acetyl-CoA is bound by residues Ala-377, 383 to 384, Ser-402, Ala-420, and Arg-437; that span reads NY.

The protein in the N-terminal section; belongs to the N-acetylglucosamine-1-phosphate uridyltransferase family. It in the C-terminal section; belongs to the transferase hexapeptide repeat family. In terms of assembly, homotrimer. The cofactor is Mg(2+).

Its subcellular location is the cytoplasm. It catalyses the reaction alpha-D-glucosamine 1-phosphate + acetyl-CoA = N-acetyl-alpha-D-glucosamine 1-phosphate + CoA + H(+). It carries out the reaction N-acetyl-alpha-D-glucosamine 1-phosphate + UTP + H(+) = UDP-N-acetyl-alpha-D-glucosamine + diphosphate. Its pathway is nucleotide-sugar biosynthesis; UDP-N-acetyl-alpha-D-glucosamine biosynthesis; N-acetyl-alpha-D-glucosamine 1-phosphate from alpha-D-glucosamine 6-phosphate (route II): step 2/2. It functions in the pathway nucleotide-sugar biosynthesis; UDP-N-acetyl-alpha-D-glucosamine biosynthesis; UDP-N-acetyl-alpha-D-glucosamine from N-acetyl-alpha-D-glucosamine 1-phosphate: step 1/1. It participates in bacterial outer membrane biogenesis; LPS lipid A biosynthesis. Catalyzes the last two sequential reactions in the de novo biosynthetic pathway for UDP-N-acetylglucosamine (UDP-GlcNAc). The C-terminal domain catalyzes the transfer of acetyl group from acetyl coenzyme A to glucosamine-1-phosphate (GlcN-1-P) to produce N-acetylglucosamine-1-phosphate (GlcNAc-1-P), which is converted into UDP-GlcNAc by the transfer of uridine 5-monophosphate (from uridine 5-triphosphate), a reaction catalyzed by the N-terminal domain. The sequence is that of Bifunctional protein GlmU from Vesicomyosocius okutanii subsp. Calyptogena okutanii (strain HA).